A 264-amino-acid chain; its full sequence is MSNSNIHTTAVIAEGAKLGKNVKIGPYCIIGPEVVLNDNVELKSHVVIEGITEIGENTVIYPFASIGQPPQILKYANERSSTIIGSNNTIREYVTVQAGSQGGGMMTRVGNNNLFMVGVHIGHDCKIGNNVVFANYVSLAGHIGVGDYAIIGGLSAVHQYARIGEYSMIGGLSPVGADVIPFGLVSSKRAVLEGLNLIGMNRKGFDKVKSLSALKAIEEIFSGEGNFAERIKQVAEKYNNNSIVIQIIDFLNQDSSRAFCRFEK.

The protein belongs to the transferase hexapeptide repeat family. LpxA subfamily. As to quaternary structure, homotrimer.

The protein resides in the cytoplasm. It carries out the reaction a (3R)-hydroxyacyl-[ACP] + UDP-N-acetyl-alpha-D-glucosamine = a UDP-3-O-[(3R)-3-hydroxyacyl]-N-acetyl-alpha-D-glucosamine + holo-[ACP]. Its pathway is glycolipid biosynthesis; lipid IV(A) biosynthesis; lipid IV(A) from (3R)-3-hydroxytetradecanoyl-[acyl-carrier-protein] and UDP-N-acetyl-alpha-D-glucosamine: step 1/6. Functionally, involved in the biosynthesis of lipid A, a phosphorylated glycolipid that anchors the lipopolysaccharide to the outer membrane of the cell. The polypeptide is Acyl-[acyl-carrier-protein]--UDP-N-acetylglucosamine O-acyltransferase (Rickettsia rickettsii).